The following is a 175-amino-acid chain: MATGPRYFVAFRRRREGRTNYHARTRLVVATKPRMVVRKTNRHIICQIITAHMEGDRTHVAANSSELRKFGYEGSLNNTPAAYLTGMLLAVRALKAGQEGAILDIGLHRATPGARVFAALKGAVEAGFDIPHNEEILPADERCKGEHIAEYAPDRAGNLPANVAATVDAIMGELN.

Belongs to the universal ribosomal protein uL18 family. As to quaternary structure, part of the 50S ribosomal subunit. Contacts the 5S and 23S rRNAs.

This is one of the proteins that bind and probably mediate the attachment of the 5S RNA into the large ribosomal subunit, where it forms part of the central protuberance. The polypeptide is Large ribosomal subunit protein uL18 (Methanospirillum hungatei JF-1 (strain ATCC 27890 / DSM 864 / NBRC 100397 / JF-1)).